Here is a 359-residue protein sequence, read N- to C-terminus: MIAAQAKLVYQLNKYYSERCQARKAAIAKTIREVCKVVSDVLKEVEVQEPRFISSLTEIDARYEGLEVVSPTEFEVVLYLNQMGVFNFVDDGSLPGCAVLKLSDGRKRSMSLWVEFITASGYLSARKIRSRFQTLVAQAVDKCSYRDVVKMIADTSEVKLRIRERYIVQITPAFKCTGIWPRSAAQWPLPHIPWPGPNRVAEVKAEGFNLLSKECYSLTGKQSSAESDAWVLQFAEAENRLLLGGCRSKCLSVLKTLRDRHLELPGQPLNNYHMKTLLLYECEKHPRETDWDEACLGDRLNGILLQLISCLQCRRCPHYFLPNLDLFQGKPHSALESAAKQTWRLAREILTNPKSLDKL.

It belongs to the mab-21 family.

It is found in the nucleus. The protein localises to the cytoplasm. In terms of biological role, required for several aspects of embryonic development including normal development of the eye. This is Protein mab-21-like 2 (mab21l2) from Xenopus tropicalis (Western clawed frog).